A 368-amino-acid polypeptide reads, in one-letter code: MTTLNSTPRADGFHMPAEWAPQTQVWMVWPERPDNWRLGGKPAQAAHVAIAKAIARFEPVTVAVSAAQYDNARARLDMPNIRVVEMSSNDAWVRDSGPTFVINDRGEVRGVNWEFNAWGGFDGGLYAPWNLDSQLGGKVLEIERCPRYVTEGFVLEGGSIHVDGEGTLITTEECLLNRNRNPHLTREQIETILGDYLAVDKVIWLPEGLFNDETDGHVDNFCCYIRPGEVLLAWTDDPEDPNYSRCHAALSILENTLDAKGRAFIVHKMPIPGPLFATEEECAGVDQVHGSQERNPSVRLAGSYVNFLIVNGGIIAPSFDDPMDEKAREILQKLFPEHEVVMAPGRELLLGGGNIHCLTQQQPAPHKN.

The active-site Amidino-cysteine intermediate is the Cys-357.

It belongs to the agmatine deiminase family. Homodimer.

The catalysed reaction is agmatine + H2O = N-carbamoylputrescine + NH4(+). It participates in amine and polyamine biosynthesis; putrescine biosynthesis via agmatine pathway; N-carbamoylputrescine from agmatine: step 1/1. In terms of biological role, mediates the hydrolysis of agmatine into N-carbamoylputrescine in the arginine decarboxylase (ADC) pathway of putrescine biosynthesis, a basic polyamine. This is Agmatine deiminase from Pseudomonas syringae pv. syringae (strain B728a).